The following is a 282-amino-acid chain: Kanosamine-6-phosphate phosphatase (282 aa).

Aspartate 25 serves as the catalytic Nucleophile. Mg(2+)-binding residues include aspartate 25 and aspartate 27. Lysine 209 provides a ligand contact to phosphate. Mg(2+)-binding residues include aspartate 232 and serine 233. A phosphate-binding site is contributed by asparagine 235.

This sequence belongs to the HAD-like hydrolase superfamily. Cof family. Homotetramer. Requires Mg(2+) as cofactor.

It carries out the reaction D-kanosamine 6-phosphate + H2O = kanosamine + phosphate. Its pathway is antibiotic biosynthesis; kanosamine biosynthesis. Involved in the biosynthesis of kanosamine (3-amino-3-deoxy-D-glucose), which is known to have antibiotic and antifungal properties, and to be a precursor of the antibiotic neotrehalosadiamine (3,3'-diamino-3,3'-dideoxy-alpha,beta-trehalose (NTD)). Catalyzes the dephosphorylation of kanosamine 6-phosphate to yield kanosamine. There is a trace amount of activity using glucosamine-6-phosphate. This is Kanosamine-6-phosphate phosphatase (ntdB) from Bacillus subtilis (strain 168).